Reading from the N-terminus, the 298-residue chain is Deleted in azoospermia-like (298 aa).

The tract at residues 1-27 (MSATTSEAPNSAVSREASTQSSSATTS) is disordered. Residues 11–27 (SAVSREASTQSSSATTS) are compositionally biased toward low complexity. The 76-residue stretch at 40 to 115 (NTVFVGGIDV…KKLKLGPAIR (76 aa)) folds into the RRM domain. The tract at residues 80-132 (KGYGFVSFYNDVDVQKIVESQINFHGKKLKLGPAIRKQNLCTYHVQPRPLIFN) is homodimerization. The DAZ domain occupies 167–190 (AYPPYPSSPVQVITGYQLPVYNYQ). Tyrosine 276 is subject to Phosphotyrosine.

It belongs to the RRM DAZ family. In terms of assembly, homodimer and heterodimer. Forms a heterodimer with DAZ. Interacts with BOLL, DAZAP1 and DAZAP2. Interacts with PUM2. Multiple DAZL RRMs can bind to a single RNA containing multiple GUU triplets. Expressed predominantly in testis with lower levels in ovary. In testis, it is expressed in pachytene spermatocytes and at lower level in type-B spermatogonia, preleptotene and zygotene spermatocytes. In ovary, it is expressed in maturing follicles. In embryonic and prepuberal ovary, it is expressed in the oocyte and follicular cells.

The protein localises to the cytoplasm. In terms of biological role, RNA-binding protein, which is essential for gametogenesis in both males and females. Plays a central role during spermatogenesis. Acts by binding to the 3'-UTR of mRNA, specifically recognizing GUU triplets, and thereby regulating the translation of key transcripts. In Mus musculus (Mouse), this protein is Deleted in azoospermia-like (Dazl).